The chain runs to 396 residues: NDP-glycosyltransferase YjiC (396 aa).

Residues N18, T234, V283, H298, and 302–306 (NSTME) each bind UDP.

The protein belongs to the UDP-glycosyltransferase family.

It carries out the reaction an NDP-glycose + an acceptor = a glycosylated acceptor + NDP.. In terms of biological role, glycosyltransferase that can glycosylate a wide range of substrates, including various flavonoids (flavones, flavonols, flavanones, flavanols, chalcones), isoflavonoids and stilbenes, to produce multiple glycosylated products. It can accept diverse nucleotide diphosphate-D/L-sugars as donors, including ADP-, GDP-, CDP-, TDP- or UDP-alpha-D-glucose, and catalyzes O-, N-, or S-glycosylation. In vitro, catalyzes the glycosylation of, among others, apigenin, 3-hydroxyflavone, phloretin or resveratrol, resulting in multiple glucosylated products, along with mono-, di-, tri- and tetraglucosides. Can also catalyze the glycosylation of the macrolide epothilone A with diverse NDP-D/L-sugars, forming different epothilone A glycoside derivatives. This chain is NDP-glycosyltransferase YjiC, found in Bacillus licheniformis (strain ATCC 14580 / DSM 13 / JCM 2505 / CCUG 7422 / NBRC 12200 / NCIMB 9375 / NCTC 10341 / NRRL NRS-1264 / Gibson 46).